The chain runs to 842 residues: Xyloglucanase Xgh74A (842 aa).

The N-terminal stretch at M1–A32 is a signal peptide. D70 (nucleophile) is an active-site residue. BNR repeat units follow at residues R134–K144, W185–K196, Y252–K262, and F358–K368. The Proton donor role is filled by D480. 5 BNR repeats span residues F533–W541, V577–K586, Y616–T626, W660–K671, and F708–V718. Residues D771 to K841 form the Dockerin domain.

This sequence belongs to the glycosyl hydrolase 74 family.

Hydrolyzes the glucosidic bonds of unbranched Glc residues in tamarind seed xyloglucan, producing XXXG, XLXG, XXLG and XLLG. Has low activity on carboxymethylcellulose, lichenan,hydroxyethylcellulose and glucuronoxylan, and no activity on xylan, polygalaturonic acid, wheat arabinoxylan, rhamnogalacturan, curdlan, laminarin, galactomannan, galactan, arabinan and pachyman or amorphous cellulose. The protein is Xyloglucanase Xgh74A of Acetivibrio thermocellus (Hungateiclostridium thermocellum).